We begin with the raw amino-acid sequence, 487 residues long: Protein nucleotidyltransferase YdiU (487 aa).

ATP-binding residues include glycine 85, glycine 87, arginine 88, lysine 108, aspartate 120, glycine 121, arginine 171, and arginine 178. The active-site Proton acceptor is the aspartate 247. 2 residues coordinate Mg(2+): asparagine 248 and aspartate 257. Aspartate 257 lines the ATP pocket.

The protein belongs to the SELO family. Mg(2+) serves as cofactor. It depends on Mn(2+) as a cofactor.

It catalyses the reaction L-seryl-[protein] + ATP = 3-O-(5'-adenylyl)-L-seryl-[protein] + diphosphate. The enzyme catalyses L-threonyl-[protein] + ATP = 3-O-(5'-adenylyl)-L-threonyl-[protein] + diphosphate. It carries out the reaction L-tyrosyl-[protein] + ATP = O-(5'-adenylyl)-L-tyrosyl-[protein] + diphosphate. The catalysed reaction is L-histidyl-[protein] + UTP = N(tele)-(5'-uridylyl)-L-histidyl-[protein] + diphosphate. It catalyses the reaction L-seryl-[protein] + UTP = O-(5'-uridylyl)-L-seryl-[protein] + diphosphate. The enzyme catalyses L-tyrosyl-[protein] + UTP = O-(5'-uridylyl)-L-tyrosyl-[protein] + diphosphate. Its function is as follows. Nucleotidyltransferase involved in the post-translational modification of proteins. It can catalyze the addition of adenosine monophosphate (AMP) or uridine monophosphate (UMP) to a protein, resulting in modifications known as AMPylation and UMPylation. The polypeptide is Protein nucleotidyltransferase YdiU (Agrobacterium fabrum (strain C58 / ATCC 33970) (Agrobacterium tumefaciens (strain C58))).